A 92-amino-acid polypeptide reads, in one-letter code: Small ribosomal subunit protein uS19 (92 aa).

This sequence belongs to the universal ribosomal protein uS19 family.

Protein S19 forms a complex with S13 that binds strongly to the 16S ribosomal RNA. This Leuconostoc mesenteroides subsp. mesenteroides (strain ATCC 8293 / DSM 20343 / BCRC 11652 / CCM 1803 / JCM 6124 / NCDO 523 / NBRC 100496 / NCIMB 8023 / NCTC 12954 / NRRL B-1118 / 37Y) protein is Small ribosomal subunit protein uS19.